The chain runs to 321 residues: Sideroflexin-3 (321 aa).

Met-1 is modified (N-acetylmethionine). 4 helical membrane passes run 146 to 164 (LGMAYVSATTGAVATALGL), 174 to 194 (LVGRFVPFAAVAAANCINIPL), 226 to 246 (FQVVISRICMAIPAMAIPPVI), and 266 to 286 (LQMGLVGFCLVFATPLCCALF).

Belongs to the sideroflexin family.

The protein resides in the mitochondrion membrane. The catalysed reaction is L-serine(in) = L-serine(out). Its function is as follows. Mitochondrial serine transporter that mediates transport of serine into mitochondria, an important step of the one-carbon metabolism pathway. Mitochondrial serine is converted to glycine and formate, which then exits to the cytosol where it is used to generate the charged folates that serve as one-carbon donors. The sequence is that of Sideroflexin-3 (SFXN3) from Bos taurus (Bovine).